Here is a 77-residue protein sequence, read N- to C-terminus: MSAIDKRVKEIVAEQLGVDEAQVTNEASFMDDLGADSLDTVELVMALEEEFDIEISDEDAEKIQSVQDAIDYITEHT.

Residues 2-77 (SAIDKRVKEI…DAIDYITEHT (76 aa)) form the Carrier domain. Residue S37 is modified to O-(pantetheine 4'-phosphoryl)serine.

This sequence belongs to the acyl carrier protein (ACP) family. 4'-phosphopantetheine is transferred from CoA to a specific serine of apo-ACP by AcpS. This modification is essential for activity because fatty acids are bound in thioester linkage to the sulfhydryl of the prosthetic group.

It localises to the cytoplasm. Its pathway is lipid metabolism; fatty acid biosynthesis. Its function is as follows. Carrier of the growing fatty acid chain in fatty acid biosynthesis. The sequence is that of Acyl carrier protein from Geobacter metallireducens (strain ATCC 53774 / DSM 7210 / GS-15).